A 392-amino-acid polypeptide reads, in one-letter code: Chaperone protein DnaJ (392 aa).

The region spanning 2 to 67 is the J domain; sequence DYYSILGISK…QKRDSYDRFG (66 aa). The segment at 148–226 adopts a CR-type zinc-finger fold; the sequence is GVEKELVVSG…CRGQGRVKDK (79 aa). Zn(2+)-binding residues include C161, C164, C178, C181, C200, C203, C214, and C217. 4 CXXCXGXG motif repeats span residues 161–168, 178–185, 200–207, and 214–221; these read CETCSGQG, CERCKGSG, CPECGGEG, and CSSCRGQG.

Belongs to the DnaJ family. In terms of assembly, homodimer. The cofactor is Zn(2+).

Its subcellular location is the cytoplasm. Participates actively in the response to hyperosmotic and heat shock by preventing the aggregation of stress-denatured proteins and by disaggregating proteins, also in an autonomous, DnaK-independent fashion. Unfolded proteins bind initially to DnaJ; upon interaction with the DnaJ-bound protein, DnaK hydrolyzes its bound ATP, resulting in the formation of a stable complex. GrpE releases ADP from DnaK; ATP binding to DnaK triggers the release of the substrate protein, thus completing the reaction cycle. Several rounds of ATP-dependent interactions between DnaJ, DnaK and GrpE are required for fully efficient folding. Also involved, together with DnaK and GrpE, in the DNA replication of plasmids through activation of initiation proteins. The polypeptide is Chaperone protein DnaJ (Chlamydia pneumoniae (Chlamydophila pneumoniae)).